The chain runs to 422 residues: 2,3-bisphosphoglycerate-independent phosphoglycerate mutase (422 aa).

The segment at 173–194 (DADPKRVGKPVKDVKPTSDDPA) is disordered. Positions 174–190 (ADPKRVGKPVKDVKPTS) are enriched in basic and acidic residues.

This sequence belongs to the BPG-independent phosphoglycerate mutase family. A-PGAM subfamily.

The enzyme catalyses (2R)-2-phosphoglycerate = (2R)-3-phosphoglycerate. It functions in the pathway carbohydrate degradation; glycolysis; pyruvate from D-glyceraldehyde 3-phosphate: step 3/5. Its function is as follows. Catalyzes the interconversion of 2-phosphoglycerate and 3-phosphoglycerate. This Methanopyrus kandleri (strain AV19 / DSM 6324 / JCM 9639 / NBRC 100938) protein is 2,3-bisphosphoglycerate-independent phosphoglycerate mutase.